Reading from the N-terminus, the 259-residue chain is Ubiquinol-cytochrome c reductase complex assembly factor 1 (259 aa).

The protein belongs to the CBP3 family. As to quaternary structure, interacts with sloth1; the interaction is probably involved in the assembly and stability of the mitochondrial ubiquinol-cytochrome c reductase complex.

The protein resides in the mitochondrion inner membrane. In terms of biological role, required for the assembly of the ubiquinol-cytochrome c reductase complex (mitochondrial respiratory chain complex III or cytochrome b-c1 complex). May be involved in cytochrome b translation and/or stability. The polypeptide is Ubiquinol-cytochrome c reductase complex assembly factor 1 (Drosophila melanogaster (Fruit fly)).